The following is a 571-amino-acid chain: Acetolactate synthase large subunit (571 aa).

Glu-51 serves as a coordination point for thiamine diphosphate. Residues Arg-153, 261–282, and 304–323 contribute to the FAD site; these read HGTY…IGVR and DIDP…IVGD. The tract at residues 394–474 is thiamine pyrophosphate binding; sequence QHQMFTALYY…VLILNLNNSS (81 aa). Mg(2+)-binding residues include Asp-445 and Asn-472.

Belongs to the TPP enzyme family. In terms of assembly, dimer of large and small chains. Mg(2+) is required as a cofactor. It depends on thiamine diphosphate as a cofactor.

It catalyses the reaction 2 pyruvate + H(+) = (2S)-2-acetolactate + CO2. The protein operates within amino-acid biosynthesis; L-isoleucine biosynthesis; L-isoleucine from 2-oxobutanoate: step 1/4. It functions in the pathway amino-acid biosynthesis; L-valine biosynthesis; L-valine from pyruvate: step 1/4. This chain is Acetolactate synthase large subunit (ilvI), found in Buchnera aphidicola subsp. Acyrthosiphon pisum (strain APS) (Acyrthosiphon pisum symbiotic bacterium).